A 335-amino-acid polypeptide reads, in one-letter code: Glycerol-3-phosphate dehydrogenase [NAD(P)+] (335 aa).

3 residues coordinate NADPH: F11, R31, and K107. Sn-glycerol 3-phosphate contacts are provided by K107 and G135. A139 provides a ligand contact to NADPH. K190, D245, S255, R256, and N257 together coordinate sn-glycerol 3-phosphate. Residue K190 is the Proton acceptor of the active site. R256 is an NADPH binding site. Positions 280 and 282 each coordinate NADPH.

Belongs to the NAD-dependent glycerol-3-phosphate dehydrogenase family.

The protein resides in the cytoplasm. The catalysed reaction is sn-glycerol 3-phosphate + NAD(+) = dihydroxyacetone phosphate + NADH + H(+). It catalyses the reaction sn-glycerol 3-phosphate + NADP(+) = dihydroxyacetone phosphate + NADPH + H(+). It functions in the pathway membrane lipid metabolism; glycerophospholipid metabolism. Catalyzes the reduction of the glycolytic intermediate dihydroxyacetone phosphate (DHAP) to sn-glycerol 3-phosphate (G3P), the key precursor for phospholipid synthesis. This Anaplasma marginale (strain St. Maries) protein is Glycerol-3-phosphate dehydrogenase [NAD(P)+].